We begin with the raw amino-acid sequence, 309 residues long: MTVFQLDDFLAGWIGGASSVIVGHPLDTVKTRLQAGKGYKNTFHCVVTIYKKENVIGFFKGLSFPLASITLYNSMVFGFFSNTQRLISKYRYGDGRHPCSMLDLTVASMLTGLVSVGVGAPVDLVKIRLQMQTQPVLAENFNLAGNGSVPLRSMGIQSQSFYRGPLHCISTVLQNEGIQGLYRGAGAMILRDIPGYALYFIPYTLFCNWLNPDDNSSPPPCCIWLAGGLAGSISWVTATPSDVVKSRLQADAMHQRKYKGILHCIMQSYRTEGIHVFFRGATVNAIRGFPMCATMFLGYELSLQFFRSF.

Solcar repeat units lie at residues 3-86 (VFQL…TQRL), 99-209 (CSML…FCNW), and 218-305 (PPPC…SLQF). A run of 6 helical transmembrane segments spans residues 9–29 (FLAG…LDTV), 61–81 (GLSF…GFFS), 105–125 (TVAS…VDLV), 186–206 (GAMI…YTLF), 218–238 (PPPC…WVTA), and 281–299 (ATVN…FLGY).

Belongs to the mitochondrial carrier (TC 2.A.29) family.

It is found in the mitochondrion inner membrane. This chain is Solute carrier family 25 member 48 (slc25a48), found in Danio rerio (Zebrafish).